The chain runs to 310 residues: Atrochrysone carboxyl ACP thioesterase CPUR_05436 (310 aa).

Zn(2+) contacts are provided by His105, His107, Asp109, and His110. Residue Asp109 is the Proton donor/acceptor of the active site.

It belongs to the metallo-beta-lactamase superfamily. Zn(2+) serves as cofactor.

It catalyses the reaction atrochrysone carboxyl-[ACP] + H2O = atrochrysone carboxylate + holo-[ACP] + H(+). The protein operates within pigment biosynthesis. Atrochrysone carboxyl ACP thioesterase; part of the ergochrome gene cluster responsible for the typical purple-black color of the ergot sclerotia. The ergochrome gene cluster produces several ergot pigments including the yellow ergochrome secalonic acid and its derivatives, as well as the red anthraquinones endocrocin and clavorubin. The pathway begins with the synthesis of atrochrysone thioester by the polyketide synthase (PKS) CPUR_05437. The atrochrysone carboxyl ACP thioesterase CPUR_05436 then breaks the thioester bond and releases the atrochrysone carboxylic acid from CPUR_05437. The atrochrysone carboxylic acid is then converted to atrochrysone which is further transformed into emodin anthrone. The next step is performed by the anthrone oxygenase CPUR_05434 that catalyzes the oxidation of emodinanthrone to emodin. Emodin is further modified to yield monodictyphenone via several steps involving CPUR_05427, CPUR_05428, CPUR_05429 and CPUR_05430. The short chain dehydrogenase/reductase CPUR_05418 then catalyzes the C-5 ketoreduction to give the xanthone skeleton of the monomeric units. Ergochromes formation requires further dimerization steps of different xanthone units, probably catalyzed by the cytochrome P450 monooxygenase CPUR_05419. CPUR_05425, CPUR_05426 and CPUR_05431 are unique to Claviceps, thus it is likely that they are involved in further modification of xanthone units or in their dimerization. The yellow ergochromes and the red anthraquinone pigments endocrocin and clavorubin are products from the same PKS derived precursors and the latter are likely shunt products in the pathway of xanthone biosynthesis. It is proposed that atrochrysone carboxylic acid released from the PKS CPUR_05437 can also be converted to endocrocin anthrone which is further oxidized into endocrocin by CPUR_05435. Endocrocin could be then modified to clavorubin, possibly by CPUR_05423 and CPUR_05431. Clavorubin is the principal anthraquinone metabolite produced by the cluster with a much higher yield compared to endocrocin. The protein is Atrochrysone carboxyl ACP thioesterase CPUR_05436 of Claviceps purpurea (strain 20.1) (Ergot fungus).